Reading from the N-terminus, the 136-residue chain is Large ribosomal subunit protein uL13 (136 aa).

Belongs to the universal ribosomal protein uL13 family. As to quaternary structure, part of the 50S ribosomal subunit.

Its function is as follows. This protein is one of the early assembly proteins of the 50S ribosomal subunit, although it is not seen to bind rRNA by itself. It is important during the early stages of 50S assembly. This chain is Large ribosomal subunit protein uL13, found in Thermoplasma acidophilum (strain ATCC 25905 / DSM 1728 / JCM 9062 / NBRC 15155 / AMRC-C165).